We begin with the raw amino-acid sequence, 281 residues long: Nucleoid occlusion protein (281 aa).

Residues 1 to 26 (MKHPFSRLFSFGEKEQEEAGGKQERE) form a disordered region. A compositionally biased stretch (basic and acidic residues) spans 12-26 (GEKEQEEAGGKQERE). Positions 145–164 (EALAQRLGKGQSTIANKLRL) form a DNA-binding region, H-T-H motif.

This sequence belongs to the ParB family.

Its subcellular location is the cytoplasm. The protein resides in the nucleoid. Functionally, effects nucleoid occlusion by binding relatively nonspecifically to DNA and preventing the assembly of the division machinery in the vicinity of the nucleoid, especially under conditions that disturb the cell cycle. It helps to coordinate cell division and chromosome segregation by preventing the formation of the Z ring through the nucleoid, which would cause chromosome breakage. This chain is Nucleoid occlusion protein, found in Geobacillus thermodenitrificans (strain NG80-2).